The sequence spans 473 residues: Zinc transporter SLC39A7 (473 aa).

Residues 11-31 (VAVGLLTWAALGLLVAGHGGH) traverse the membrane as a helical segment. Composition is skewed to basic and acidic residues over residues 44–56 (GHSHRHSHEDFHH) and 66–114 (HTHE…EHSH). The interval 44–120 (GHSHRHSHED…EHSHGGYGES (77 aa)) is disordered. The residue at position 66 (H66) is a Pros-methylhistidine. The next 3 helical transmembrane spans lie at 138–158 (ALGATVLISAAPFFVLFLIPV), 169–189 (LQILLSFASGGLLGDAFLHLI), and 214–234 (GPILSVGLWVLSGIVAFLVVE). The tract at residues 243–316 (GHEHSHGHGH…QHSGEEKAGS (74 aa)) is disordered. Residues S278 and S279 each carry the phosphoserine modification. Basic and acidic residues predominate over residues 298–316 (RPKDGPVRPQHSGEEKAGS). The helical transmembrane segment at 388–408 (LLTAVGALAGTAFALLTEGGA) threads the bilayer. A disordered region spans residues 428 to 473 (GDQAATQASPRSTSLPPVGEEDFREDPGPRQKGQQEKSGINVNCVS). The span at 431–442 (AATQASPRSTSL) shows a compositional bias: polar residues. Positions 452–462 (EDPGPRQKGQQ) are enriched in basic and acidic residues. The segment covering 463–473 (EKSGINVNCVS) has biased composition (polar residues).

Belongs to the ZIP transporter (TC 2.A.5) family. KE4/Catsup subfamily. Homodimer. Methylation at some His residue by METTL9 leads to reduced zinc-binding. Post-translationally, rapidly phosphorylated by CK2 following Zn(2+) treatment. This phosphorylation is required for efficient cytosolic Zn(2+) release.

The protein localises to the endoplasmic reticulum membrane. Its subcellular location is the golgi apparatus. It localises to the cis-Golgi network membrane. It catalyses the reaction Zn(2+)(in) = Zn(2+)(out). Transports Zn(2+) from the endoplasmic reticulum (ER)/Golgi apparatus to the cytosol, playing an essential role in the regulation of cytosolic zinc levels. Acts as a gatekeeper of zinc release from intracellular stores, requiring post-translational activation by phosphorylation on residues, resulting in activation of multiple downstream pathways leading to cell growth and proliferation. Has an essential role in B cell development and is required for proper B cell receptor signaling. Plays an important role in maintaining intestinal epithelial homeostasis and skin dermis development by regulating ER function. Controls cell signaling pathways involved in glucose metabolism in skeletal muscle. Has a protective role against ER stress in different biological contexts. Mediates Zn(2+)-induced ferroptosis. This Sus scrofa (Pig) protein is Zinc transporter SLC39A7 (SLC39A7).